The sequence spans 81 residues: Small ribosomal subunit protein bS18 (81 aa).

It belongs to the bacterial ribosomal protein bS18 family. In terms of assembly, part of the 30S ribosomal subunit. Forms a tight heterodimer with protein bS6.

Binds as a heterodimer with protein bS6 to the central domain of the 16S rRNA, where it helps stabilize the platform of the 30S subunit. The polypeptide is Small ribosomal subunit protein bS18 (Syntrophobacter fumaroxidans (strain DSM 10017 / MPOB)).